Consider the following 80-residue polypeptide: Gamma-conotoxin-like Am6.6 (80 aa).

An N-terminal signal peptide occupies residues 1-19; sequence MEKLTILLLVAAILMSTQA. The propeptide occupies 20 to 45; the sequence is LNQEQRQQAKINLLSKKKPSAERWRR. Disulfide bonds link Cys-47-Cys-61, Cys-54-Cys-65, and Cys-60-Cys-70. Residues Glu-56 and Glu-59 each carry the 4-carboxyglutamate modification. Residue Glu-71 is modified to 4-carboxyglutamate. Pro-76 is modified (4-hydroxyproline). The propeptide occupies 78-80; sequence RAI.

This sequence belongs to the conotoxin O2 family. Expressed by the venom duct.

Its subcellular location is the secreted. Its function is as follows. Gamma-conotoxins may act on voltage-gated non-specific cation pacemaker channels (HCN). The polypeptide is Gamma-conotoxin-like Am6.6 (Conus amadis (Amadis cone)).